Here is a 444-residue protein sequence, read N- to C-terminus: Crh-like protein 3 (444 aa).

Residues 1–19 (MVGKSTLLSVLASASVAFA) form the signal peptide. An intrachain disulfide couples Cys27 to Cys34. The GH16 domain occupies 57-271 (SLESCVPEPV…WAGGEIDWNS (215 aa)). The active-site Nucleophile is the Glu157. The active-site Proton donor is the Glu161. Glu161 contacts chitin. Residues Asn187 and Asn228 are each glycosylated (N-linked (GlcNAc...) asparagine). Chitin contacts are provided by Trp248 and Thr259. N-linked (GlcNAc...) asparagine glycosylation is found at Asn315, Asn323, Asn336, and Asn371. Residue Ser415 is the site of GPI-anchor amidated serine attachment. The propeptide at 416–444 (ADSLVANQERVLKGSLFAGIVAVVAMMAL) is removed in mature form.

It belongs to the glycosyl hydrolase 16 family. CRH1 subfamily. In terms of assembly, forms homodimers as well as heterodimers with other crh protein members crh1 and crh2. Dimerization may be necessary for the transglycosylation activity.

The protein localises to the cell membrane. The enzyme catalyses Random endo-hydrolysis of N-acetyl-beta-D-glucosaminide (1-&gt;4)-beta-linkages in chitin and chitodextrins.. In terms of biological role, dual chitinase/transglycosylase that plays a role in cell wall architecture. Chitinase and transglycosylase activities are coupled. Required for the polysaccharide cross-linking at the septa and the cell wall. More specifically, transfers chitin to 1,6-beta-glucan in the cell wall. The polypeptide is Crh-like protein 3 (Botryotinia fuckeliana (strain B05.10) (Noble rot fungus)).